A 145-amino-acid chain; its full sequence is Bacilliredoxin SERP1075 (145 aa).

Belongs to the bacilliredoxin family.

The chain is Bacilliredoxin SERP1075 from Staphylococcus epidermidis (strain ATCC 35984 / DSM 28319 / BCRC 17069 / CCUG 31568 / BM 3577 / RP62A).